The sequence spans 155 residues: Leader peptidase HopD (155 aa).

Belongs to the peptidase A24 family.

This is Leader peptidase HopD (hopD) from Escherichia coli.